Reading from the N-terminus, the 334-residue chain is O(6)-methylguanine-induced apoptosis 2 (334 aa).

Positions 1–60 (MDNSAQKNERTGKHPRRASEVQKGFTAAYPTQSSIPFKSQASVIPESEKKGFNSQAKRFP) are disordered. Positions 7–20 (KNERTGKHPRRASE) are enriched in basic and acidic residues. Over residues 29-42 (YPTQSSIPFKSQAS) the composition is skewed to polar residues. STPGR repeat units lie at residues 67–74 (PGPGFYNV), 109–117 (PAANAYTIP), 148–155 (PAPNYYNA), 187–206 (GPPPGHYDINESLVKQSPNT), 225–257 (GPGPGYYNPSDCTKVPKKTLFPKNPILNFSAQP), 267–282 (PGPGQYEIVDYLGPRK), and 306–316 (LPGPATYKPEL). The residue at position 72 (Tyr-72) is a Phosphotyrosine.

Belongs to the STPG1 family.

Its subcellular location is the cytoplasm. The protein resides in the nucleus. May positively contribute to the induction of apoptosis triggered by O(6)-methylguanine. The sequence is that of O(6)-methylguanine-induced apoptosis 2 (STPG1) from Homo sapiens (Human).